Here is an 82-residue protein sequence, read N- to C-terminus: Fibroblast growth factor 8 (82 aa).

A glycan (N-linked (GlcNAc...) asparagine) is linked at Asn68.

It belongs to the heparin-binding growth factors family. In terms of assembly, monomer. Homodimer. Interacts with FGFR1, FGFR2, FGFR3 and FGFR4. Affinity between fibroblast growth factors (FGFs) and their receptors is increased by heparan sulfate glycosaminoglycans that function as coreceptors.

It localises to the secreted. Functionally, plays an important role in the regulation of embryonic development, cell proliferation, cell differentiation and cell migration. Required for normal brain, eye, ear and limb development during embryogenesis. Required for normal development of the gonadotropin-releasing hormone (GnRH) neuronal system. Plays a role in neurite outgrowth in hippocampal cells. The chain is Fibroblast growth factor 8 (FGF8) from Canis lupus familiaris (Dog).